The chain runs to 145 residues: Basic phospholipase A2 cL038 (145 aa).

Positions 1–21 are cleaved as a signal peptide; it reads MYPAHLLVLLAVCVSLLGASA. A propeptide spanning residues 22–27 is cleaved from the precursor; it reads IPPLPL. 7 disulfide bridges follow: Cys-38/Cys-98, Cys-54/Cys-144, Cys-56/Cys-72, Cys-71/Cys-125, Cys-78/Cys-118, Cys-87/Cys-111, and Cys-105/Cys-116. Tyr-55, Gly-57, and Gly-59 together coordinate Ca(2+). Residue His-75 is part of the active site. Ca(2+) is bound at residue Asp-76. Asp-119 is a catalytic residue.

The protein belongs to the phospholipase A2 family. Group I subfamily. D49 sub-subfamily. It depends on Ca(2+) as a cofactor. Expressed by the venom gland.

Its subcellular location is the secreted. The enzyme catalyses a 1,2-diacyl-sn-glycero-3-phosphocholine + H2O = a 1-acyl-sn-glycero-3-phosphocholine + a fatty acid + H(+). PLA2 catalyzes the calcium-dependent hydrolysis of the 2-acyl groups in 3-sn-phosphoglycerides. This Laticauda semifasciata (Black-banded sea krait) protein is Basic phospholipase A2 cL038.